A 418-amino-acid polypeptide reads, in one-letter code: Tektin-1 (418 aa).

Coiled coils occupy residues 21–84 (KNQY…LEQL), 268–308 (LKET…DQEG), and 336–383 (RLIK…ENTI). The interval 399–418 (PRDGDDHGEWAGGSHPEAVC) is disordered.

The protein belongs to the tektin family. Microtubule inner protein component of sperm flagellar doublet microtubules. Ubiquitinated, leading to its degradation. Deubiquitinated by USP16, promoting its stability. Expressed in trachea multiciliated cells.

The protein resides in the cytoplasm. It localises to the cytoskeleton. The protein localises to the cilium axoneme. It is found in the flagellum axoneme. Microtubule inner protein (MIP) part of the dynein-decorated doublet microtubules (DMTs) in cilia and flagellar axoneme. Forms filamentous polymers in the walls of ciliary and flagellar microtubules. This chain is Tektin-1 (TEKT1), found in Bos taurus (Bovine).